Consider the following 696-residue polypeptide: Polyribonucleotide nucleotidyltransferase (696 aa).

Mg(2+) contacts are provided by aspartate 489 and aspartate 495. The KH domain maps to 556 to 615; sequence PQYVTMKINPEKIRDVIGKGGVVIREITEATNCAIDISDDGTIKIAAHTTEEGEAAKRRI. Positions 625 to 693 constitute an S1 motif domain; sequence GKVYEGTVVK…RQGRVRLSMK (69 aa).

The protein belongs to the polyribonucleotide nucleotidyltransferase family. Component of the RNA degradosome, which is a multiprotein complex involved in RNA processing and mRNA degradation. Requires Mg(2+) as cofactor.

The protein resides in the cytoplasm. It carries out the reaction RNA(n+1) + phosphate = RNA(n) + a ribonucleoside 5'-diphosphate. In terms of biological role, involved in mRNA degradation. Catalyzes the phosphorolysis of single-stranded polyribonucleotides processively in the 3'- to 5'-direction. This Coxiella burnetii (strain CbuK_Q154) (Coxiella burnetii (strain Q154)) protein is Polyribonucleotide nucleotidyltransferase.